A 263-amino-acid chain; its full sequence is Tryptophan synthase alpha chain (263 aa).

Catalysis depends on proton acceptor residues Glu-51 and Asp-62.

It belongs to the TrpA family. In terms of assembly, tetramer of two alpha and two beta chains.

The catalysed reaction is (1S,2R)-1-C-(indol-3-yl)glycerol 3-phosphate + L-serine = D-glyceraldehyde 3-phosphate + L-tryptophan + H2O. It participates in amino-acid biosynthesis; L-tryptophan biosynthesis; L-tryptophan from chorismate: step 5/5. Its function is as follows. The alpha subunit is responsible for the aldol cleavage of indoleglycerol phosphate to indole and glyceraldehyde 3-phosphate. This Methanosarcina barkeri (strain Fusaro / DSM 804) protein is Tryptophan synthase alpha chain.